Consider the following 946-residue polypeptide: Villin-4 (946 aa).

Gelsolin-like repeat units follow at residues 28–109 (NFKP…ETEK), 152–219 (VHVK…EDGK), 274–339 (LEHE…TIMF), and 641–715 (EIHH…PQFF). 3 disordered regions span residues 744-789 (ATPS…GRSP), 801-832 (PSTRYLSTPPPAVKKLFPRSGGSELPKTSSKQ), and 844-902 (GPTK…PAPD). The span at 765-777 (QDKSQQRTRSMSH) shows a compositional bias: polar residues. Residues 874 to 883 (SENEPEDDEN) show a composition bias toward acidic residues. Positions 881–946 (DENSTIYPYE…NRLKSDLQLF (66 aa)) constitute an HP domain.

It belongs to the villin/gelsolin family.

The protein resides in the cytoplasm. Its subcellular location is the cytoskeleton. Functionally, ca(2+)-regulated actin-binding protein. Binds actin microfilaments (MFs). Involved in actin filament bundling, severing and capping. Caps the barbed end of actin filaments and is able to sever them in a calcium-dependent manner. In Oryza sativa subsp. japonica (Rice), this protein is Villin-4.